The chain runs to 237 residues: Lectin alpha chain (237 aa).

The Mn(2+) site is built by Glu8 and Asp10. Ca(2+)-binding residues include Asp10, Tyr12, Asn14, and Asp19. Tyr12 contacts a carbohydrate. 3 residues coordinate Mn(2+): Asp19, His24, and Ser34. Residue 99-100 coordinates a carbohydrate; it reads LY. Ca(2+) is bound at residue Asp208. Arg228 contacts a carbohydrate.

The protein belongs to the leguminous lectin family. In terms of assembly, equilibrium between homodimer and homotetramer. Oligomerization is pH-dependent with homotetramers forming at pH 6.5 and above. In terms of processing, the beta and gamma chains are produced by partial proteolytic processing of the lectin alpha chain by an asparaginyl endopeptidase. Mixture of 60% alpha lectin and 40% of its beta and gamma proteolytic fragments.

D-mannose/D-glucose-binding lectin. Has anti-inflammatory activity in rats. Induces histamine release in mast cells from rat. Induces lymphocyte proliferation and IFNG production. The sequence is that of Lectin alpha chain from Dioclea guianensis.